Reading from the N-terminus, the 491-residue chain is Maintenance of mitochondrial morphology protein 1 (491 aa).

Over 1-22 (MTFQQNEPSAVPAQSSLSFTQG) the chain is Lumenal. Residues 23-43 (FLLGQLSVVLLIGAFIKFFIF) traverse the membrane as a helical segment. At 44-491 (GEAPPPPSRG…GTLPGGAAAN (448 aa)) the chain is on the cytoplasmic side. 3 disordered regions span residues 50–95 (PSRG…PVPS), 275–325 (PPLH…SPKS), and 392–491 (RTGV…AAAN). Residues 54 to 64 (LSHRASTHRRS) are compositionally biased toward basic residues. Composition is skewed to polar residues over residues 65–78 (NSIY…GTSR) and 85–95 (STSNVLRPVPS). Positions 131 to 384 (QPESLDWFNV…EPRVQVVGLP (254 aa)) constitute an SMP-LTD domain. The span at 275 to 287 (PPLHTPSPSPSPP) shows a compositional bias: pro residues. Composition is skewed to polar residues over residues 300-315 (TNGS…NAQE) and 403-412 (TGSNAASRSA). The span at 422 to 434 (RADDIGREPDGLR) shows a compositional bias: basic and acidic residues.

The protein belongs to the MMM1 family. In terms of assembly, homodimer. Component of the ER-mitochondria encounter structure (ERMES) or MDM complex, composed of mmm1, mdm10, mdm12 and mdm34. A mmm1 homodimer associates with one molecule of mdm12 on each side in a pairwise head-to-tail manner, and the SMP-LTD domains of mmm1 and mdm12 generate a continuous hydrophobic tunnel for phospholipid trafficking.

Its subcellular location is the endoplasmic reticulum membrane. Its function is as follows. Component of the ERMES/MDM complex, which serves as a molecular tether to connect the endoplasmic reticulum (ER) and mitochondria. Components of this complex are involved in the control of mitochondrial shape and protein biogenesis, and function in nonvesicular lipid trafficking between the ER and mitochondria. The mdm12-mmm1 subcomplex functions in the major beta-barrel assembly pathway that is responsible for biogenesis of all outer membrane beta-barrel proteins, and acts in a late step after the SAM complex. The mdm10-mdm12-mmm1 subcomplex further acts in the TOM40-specific pathway after the action of the mdm12-mmm1 complex. Essential for establishing and maintaining the structure of mitochondria and maintenance of mtDNA nucleoids. The chain is Maintenance of mitochondrial morphology protein 1 from Aspergillus flavus (strain ATCC 200026 / FGSC A1120 / IAM 13836 / NRRL 3357 / JCM 12722 / SRRC 167).